The chain runs to 149 residues: 1,4-dihydroxy-2-naphthoyl-CoA hydrolase (149 aa).

Asp-19 is an active-site residue.

It belongs to the 4-hydroxybenzoyl-CoA thioesterase family. DHNA-CoA hydrolase subfamily.

The enzyme catalyses 1,4-dihydroxy-2-naphthoyl-CoA + H2O = 1,4-dihydroxy-2-naphthoate + CoA + H(+). The protein operates within cofactor biosynthesis; phylloquinone biosynthesis. Its pathway is quinol/quinone metabolism; 1,4-dihydroxy-2-naphthoate biosynthesis; 1,4-dihydroxy-2-naphthoate from chorismate: step 7/7. In terms of biological role, catalyzes the hydrolysis of 1,4-dihydroxy-2-naphthoyl-CoA (DHNA-CoA) to 1,4-dihydroxy-2-naphthoate (DHNA), a reaction involved in phylloquinone (vitamin K1) biosynthesis. In Synechococcus sp. (strain CC9605), this protein is 1,4-dihydroxy-2-naphthoyl-CoA hydrolase.